The sequence spans 206 residues: uncharacterized protein (206 aa).

The signal sequence occupies residues 1–18; sequence MKTYSLLLGLFISFGVLA.

This is an uncharacterized protein from Haemophilus influenzae (strain ATCC 51907 / DSM 11121 / KW20 / Rd).